The following is a 90-amino-acid chain: Probable small nuclear ribonucleoprotein E (90 aa).

In terms of domain architecture, Sm spans 14-89; the sequence is VNLIFRYLQN…ITLIHAAAQE (76 aa).

This sequence belongs to the snRNP Sm proteins family. In terms of assembly, core component of the spliceosomal U1, U2, U4 and U5 small nuclear ribonucleoproteins (snRNPs), the building blocks of the spliceosome.

It is found in the nucleus. The protein resides in the cytoplasm. It localises to the cytosol. Functionally, plays a role in pre-mRNA splicing as a core component of the spliceosomal U1, U2, U4 and U5 small nuclear ribonucleoproteins (snRNPs), the building blocks of the spliceosome. This is Probable small nuclear ribonucleoprotein E (snr-6) from Caenorhabditis briggsae.